The following is a 584-amino-acid chain: Isopropyl malate synthase htyA (584 aa).

A Pyruvate carboxyltransferase domain is found at 39–317; it reads PIWLSTDLRD…ETGLDFSNLP (279 aa).

It belongs to the alpha-IPM synthase/homocitrate synthase family. LeuA type 2 subfamily.

The catalysed reaction is 3-methyl-2-oxobutanoate + acetyl-CoA + H2O = (2S)-2-isopropylmalate + CoA + H(+). It functions in the pathway antifungal biosynthesis. Isopropyl malate synthase; part of the gene cluster that mediates the de novo generation of L-homotyrosine from acetyl-CoA and 4-hydroxyphenyl-pyruvate. L-homotyrosine is a building block of echinocandin B, a fungal lipidated cyclic hexapeptide that acts as an antifungal agent. L-homotyrosine 4-hydroxyphenyl-pyruvate first undergoes an aldol-type condensation by htyA with the C-2 of acetyl-CoA followed by the release of CoA to form 2-(4-hydroxybenzyl)-malate. This is followed by isomerization of 2-(4-hydroxy-benzyl)-malate to 3-(4-hydroxybenzyl)-malate by htyD. Thereafter, 3-(4-hydroxybenzyl)-malate undergoes decarboxylation and oxidation to form 2-oxo-4-(4-hydroxybenzyl)butanoic acid, coupled to reduction of NAD(+) to NADH by htyC. The product then undergoes transamination catalyzed by htyB to form L-homotyrosine. The polypeptide is Isopropyl malate synthase htyA (Aspergillus rugulosus (Emericella rugulosa)).